The sequence spans 823 residues: Apoptosis-resistant E3 ubiquitin protein ligase 1 (823 aa).

A Filamin repeat occupies 52-158; the sequence is GNYLDPRSCK…VAYSPYYKIF (107 aa). Positions 315-345 are disordered; it reads PPMHMTSSQRRPSTAVDEEDEDSPSECHTPE. The interaction with SOCS2 stretch occupies residues 483–789; it reads SISDWSKNFE…THSTLPTAHT (307 aa). In terms of domain architecture, HECT spans 483 to 823; it reads SISDWSKNFE…SEGCEGFGML (341 aa). Cys790 serves as the catalytic Glycyl thioester intermediate.

In terms of assembly, interacts with SOCS2. Interacts (via HECT domain) with HTRA2, DIABLO/SMAC and SEPTIN4; in the cytoplasm following induction of apoptosis. Post-translationally, autoubiquitinated in vitro in the presence of E2 enzyme UBE2D1/UBCH5A.

It catalyses the reaction S-ubiquitinyl-[E2 ubiquitin-conjugating enzyme]-L-cysteine + [acceptor protein]-L-lysine = [E2 ubiquitin-conjugating enzyme]-L-cysteine + N(6)-ubiquitinyl-[acceptor protein]-L-lysine.. It participates in protein modification; protein ubiquitination. In terms of biological role, E3 ubiquitin-protein ligase that catalyzes 'Lys-11'- or 'Lys-33'-linked polyubiquitin chains, with some preference for 'Lys-33' linkages. E3 ubiquitin-protein ligases accept ubiquitin from an E2 ubiquitin-conjugating enzyme in the form of a thioester and then directly transfers the ubiquitin to targeted substrates. Ubiquitinates SEPTIN4, DIABLO/SMAC and HTRA2 in vitro. Modulates pulmonary inflammation by targeting SOCS2 for ubiquitination and subsequent degradation by the proteasome. The protein is Apoptosis-resistant E3 ubiquitin protein ligase 1 of Homo sapiens (Human).